The chain runs to 790 residues: Penicillin-binding protein 1A (790 aa).

Residues 1-20 (MANVRKRRKKKNEHKALRLT) lie on the Cytoplasmic side of the membrane. The chain crosses the membrane as a helical; Signal-anchor for type II membrane protein span at residues 21 to 41 (FITLLMVFLFSCVAAAGVGLA). Residues 42–790 (MIKAAPPLDV…RKRKMIKPQI (749 aa)) lie on the Extracellular side of the membrane. Residues 61–230 (SVIYDDKNKL…PQSPSTFYNA (170 aa)) are transglycosylase. Catalysis depends on E100, which acts as the Proton donor; for transglycosylase activity. The transpeptidase stretch occupies residues 363–656 (ASVSIVDYKT…AALIWKLIMG (294 aa)). Residue S402 is the Acyl-ester intermediate; for transpeptidase activity of the active site. Residues 720–790 (NKDKDDDDDD…RKRKMIKPQI (71 aa)) form a disordered region. Residues 724–740 (DDDDDDKDKDKEDEEEN) are compositionally biased toward acidic residues. A compositionally biased stretch (basic and acidic residues) spans 741-779 (KDEKNEDKKEAKDNTKNKDKDKKKDNDRKIDMDKKPDSS). Basic residues predominate over residues 780–790 (KRKRKMIKPQI).

The protein in the N-terminal section; belongs to the glycosyltransferase 51 family. In the C-terminal section; belongs to the transpeptidase family.

It is found in the cell membrane. The enzyme catalyses [GlcNAc-(1-&gt;4)-Mur2Ac(oyl-L-Ala-gamma-D-Glu-L-Lys-D-Ala-D-Ala)](n)-di-trans,octa-cis-undecaprenyl diphosphate + beta-D-GlcNAc-(1-&gt;4)-Mur2Ac(oyl-L-Ala-gamma-D-Glu-L-Lys-D-Ala-D-Ala)-di-trans,octa-cis-undecaprenyl diphosphate = [GlcNAc-(1-&gt;4)-Mur2Ac(oyl-L-Ala-gamma-D-Glu-L-Lys-D-Ala-D-Ala)](n+1)-di-trans,octa-cis-undecaprenyl diphosphate + di-trans,octa-cis-undecaprenyl diphosphate + H(+). It catalyses the reaction Preferential cleavage: (Ac)2-L-Lys-D-Ala-|-D-Ala. Also transpeptidation of peptidyl-alanyl moieties that are N-acyl substituents of D-alanine.. The protein operates within cell wall biogenesis; peptidoglycan biosynthesis. Cell wall formation. Synthesis of cross-linked peptidoglycan from the lipid intermediates. The enzyme has a penicillin-insensitive transglycosylase N-terminal domain (formation of linear glycan strands) and a penicillin-sensitive transpeptidase C-terminal domain (cross-linking of the peptide subunits). The protein is Penicillin-binding protein 1A (pbpA) of Clostridium tetani (strain Massachusetts / E88).